Reading from the N-terminus, the 270-residue chain is Small ribosomal subunit protein eS1 (270 aa).

Positions 235-270 (GTSKGGAASTAAVAKGEEGVKVDRPEGYEPPVLETV) are disordered. Over residues 239 to 248 (GGAASTAAVA) the composition is skewed to low complexity. Positions 249–261 (KGEEGVKVDRPEG) are enriched in basic and acidic residues.

Belongs to the eukaryotic ribosomal protein eS1 family. In terms of assembly, component of the small ribosomal subunit. Mature ribosomes consist of a small (40S) and a large (60S) subunit. The 40S subunit contains about 33 different proteins and 1 molecule of RNA (18S). The 60S subunit contains about 49 different proteins and 3 molecules of RNA (28S, 5.8S and 5S).

It is found in the cytoplasm. In Ixodes scapularis (Black-legged tick), this protein is Small ribosomal subunit protein eS1.